The following is a 704-amino-acid chain: DNA ligase (704 aa).

NAD(+)-binding positions include 44-48 (DYEYD), 93-94 (SI), and glutamate 125. The active-site N6-AMP-lysine intermediate is the lysine 127. Residues arginine 148, glutamate 184, lysine 300, and lysine 324 each contribute to the NAD(+) site. Positions 418, 421, 436, and 442 each coordinate Zn(2+). The BRCT domain occupies 625 to 704 (IISSNISGKI…DEWEHLINEK (80 aa)).

Belongs to the NAD-dependent DNA ligase family. LigA subfamily. The cofactor is Mg(2+). Mn(2+) is required as a cofactor.

The enzyme catalyses NAD(+) + (deoxyribonucleotide)n-3'-hydroxyl + 5'-phospho-(deoxyribonucleotide)m = (deoxyribonucleotide)n+m + AMP + beta-nicotinamide D-nucleotide.. DNA ligase that catalyzes the formation of phosphodiester linkages between 5'-phosphoryl and 3'-hydroxyl groups in double-stranded DNA using NAD as a coenzyme and as the energy source for the reaction. It is essential for DNA replication and repair of damaged DNA. In Pelobacter propionicus (strain DSM 2379 / NBRC 103807 / OttBd1), this protein is DNA ligase.